The sequence spans 598 residues: uncharacterized protein (598 aa).

Ser-46 is modified (phosphoserine). The SAC domain occupies 106–441 (LQNHLKTGPF…ADYISLSYSG (336 aa)). Transmembrane regions (helical) follow at residues 508 to 528 (TIRC…MTLF) and 535 to 555 (ILPP…SLYY).

The protein localises to the endoplasmic reticulum membrane. This is an uncharacterized protein from Schizosaccharomyces pombe (strain 972 / ATCC 24843) (Fission yeast).